Here is a 231-residue protein sequence, read N- to C-terminus: 2-C-methyl-D-erythritol 4-phosphate cytidylyltransferase (231 aa).

Belongs to the IspD/TarI cytidylyltransferase family. IspD subfamily.

It carries out the reaction 2-C-methyl-D-erythritol 4-phosphate + CTP + H(+) = 4-CDP-2-C-methyl-D-erythritol + diphosphate. It functions in the pathway isoprenoid biosynthesis; isopentenyl diphosphate biosynthesis via DXP pathway; isopentenyl diphosphate from 1-deoxy-D-xylulose 5-phosphate: step 2/6. Catalyzes the formation of 4-diphosphocytidyl-2-C-methyl-D-erythritol from CTP and 2-C-methyl-D-erythritol 4-phosphate (MEP). The polypeptide is 2-C-methyl-D-erythritol 4-phosphate cytidylyltransferase (Rubrobacter xylanophilus (strain DSM 9941 / JCM 11954 / NBRC 16129 / PRD-1)).